We begin with the raw amino-acid sequence, 334 residues long: UDP-N-acetylglucosamine--N-acetylmuramyl-(pentapeptide) pyrophosphoryl-undecaprenol N-acetylglucosamine transferase (334 aa).

Residues 11–13 (TGG), Asn125, Ser185, Ile229, and Gln274 contribute to the UDP-N-acetyl-alpha-D-glucosamine site.

It belongs to the glycosyltransferase 28 family. MurG subfamily.

The protein resides in the cell inner membrane. The catalysed reaction is di-trans,octa-cis-undecaprenyl diphospho-N-acetyl-alpha-D-muramoyl-L-alanyl-D-glutamyl-meso-2,6-diaminopimeloyl-D-alanyl-D-alanine + UDP-N-acetyl-alpha-D-glucosamine = di-trans,octa-cis-undecaprenyl diphospho-[N-acetyl-alpha-D-glucosaminyl-(1-&gt;4)]-N-acetyl-alpha-D-muramoyl-L-alanyl-D-glutamyl-meso-2,6-diaminopimeloyl-D-alanyl-D-alanine + UDP + H(+). It functions in the pathway cell wall biogenesis; peptidoglycan biosynthesis. Functionally, cell wall formation. Catalyzes the transfer of a GlcNAc subunit on undecaprenyl-pyrophosphoryl-MurNAc-pentapeptide (lipid intermediate I) to form undecaprenyl-pyrophosphoryl-MurNAc-(pentapeptide)GlcNAc (lipid intermediate II). The polypeptide is UDP-N-acetylglucosamine--N-acetylmuramyl-(pentapeptide) pyrophosphoryl-undecaprenol N-acetylglucosamine transferase (Thermosipho africanus (strain TCF52B)).